Reading from the N-terminus, the 30-residue chain is Conotoxin CcTx (30 aa).

Pro-2 is subject to 4-hydroxyproline. Ser-7 is a glycosylation site (O-linked (HexNAc...) serine). Disulfide bonds link Cys-12–Cys-21, Cys-13–Cys-26, and Cys-24–Cys-30. Pro-17 and Pro-22 each carry 4-hydroxyproline.

O-glycosylated at Ser-7 by a core type 9 glycan, containing both D- and L-galactose units (alpha-L-Galp-(1-&gt;4)-alpha-D- GlcpNAc-(1-&gt;6)-[alpha-L-Galp-(1-&gt;2)-bets-D-Galp-(1-&gt;3)-]alpha-D-GalpNAc-(1-&gt;O)). In terms of tissue distribution, expressed by the venom duct.

The protein localises to the secreted. In terms of biological role, may specifically activate neuronal voltage-gated sodium channels (Nav) at the resting membrane potential. Causes a marked contraction and extension of the caudal and dorsal fins in fish and noticeable spontaneous contractions of isolated frog neuromuscular preparations. The chain is Conotoxin CcTx from Conus consors (Singed cone).